The following is a 380-amino-acid chain: DNA primase small subunit PriS (380 aa).

Catalysis depends on residues D103, D105, and D284.

The protein belongs to the eukaryotic-type primase small subunit family. As to quaternary structure, heterodimer of a small subunit (PriS) and a large subunit (PriL). The cofactor is Mg(2+). Mn(2+) is required as a cofactor.

Its function is as follows. Catalytic subunit of DNA primase, an RNA polymerase that catalyzes the synthesis of short RNA molecules used as primers for DNA polymerase during DNA replication. The small subunit contains the primase catalytic core and has DNA synthesis activity on its own. Binding to the large subunit stabilizes and modulates the activity, increasing the rate of DNA synthesis while decreasing the length of the DNA fragments, and conferring RNA synthesis capability. The DNA polymerase activity may enable DNA primase to also catalyze primer extension after primer synthesis. May also play a role in DNA repair. This chain is DNA primase small subunit PriS, found in Methanocorpusculum labreanum (strain ATCC 43576 / DSM 4855 / Z).